A 237-amino-acid polypeptide reads, in one-letter code: V-type proton ATPase subunit E (237 aa).

Belongs to the V-ATPase E subunit family. V-ATPase is a heteromultimeric enzyme composed of a peripheral catalytic V1 complex (components A to H) attached to an integral membrane V0 proton pore complex (components: a, c, c', c'' and d).

Functionally, subunit of the peripheral V1 complex of vacuolar ATPase essential for assembly or catalytic function. V-ATPase is responsible for acidifying a variety of intracellular compartments in eukaryotic cells. In Gossypium hirsutum (Upland cotton), this protein is V-type proton ATPase subunit E (VATE).